A 359-amino-acid chain; its full sequence is Probable tyrosine-protein phosphatase pir-2 (359 aa).

The Tyrosine-protein phosphatase domain maps to 16 to 191 (QPVGNVIPRT…AKDKRDKQVD (176 aa)). The Phosphocysteine intermediate role is filled by cysteine 131. The segment covering 184–199 (DKRDKQVDSDSDSSER) has biased composition (basic and acidic residues). Disordered stretches follow at residues 184 to 211 (DKRD…KHRE), 234 to 259 (SVSG…PHHW), and 274 to 328 (PVAN…RNRM). Basic residues predominate over residues 200 to 210 (QRKKKNKRKHR). The span at 234–246 (SVSGTDYQNSPNG) shows a compositional bias: polar residues. Residues 290–309 (PQEEEEFEEDFEEIEEETET) are compositionally biased toward acidic residues. Residues 319–328 (SKRRARRNRM) are compositionally biased toward basic residues.

The protein belongs to the protein-tyrosine phosphatase family. Non-receptor class CDC14 subfamily.

The enzyme catalyses O-phospho-L-tyrosyl-[protein] + H2O = L-tyrosyl-[protein] + phosphate. The chain is Probable tyrosine-protein phosphatase pir-2 from Caenorhabditis elegans.